Reading from the N-terminus, the 536-residue chain is MELMNLASKETSYWMIALPAGFGSQNLHDVSTLGYLFLAVVFLSIVTWALAGGGGVAWKNGRNRLGRVAIPGPRGIPVFGSLFTLSRGLAHRTLAAMAWSRANTEIMAFSLGSTPVIVASEPNIAREILMSPHFADRPVKQSAKSLMFSRAIGFAPNGTYWRMLRRIASTHLFAPRRILAHEAGRQLDCAEMVKAVSVEQNGAGSVVLRKHLQLAALNNIMGSVFGRRYDPLAQKEDLDELTSMVREGFELLGAFNWSDYLPWLGYFYDSIRLNQRCSDLVPRIRTLVKKIIDEHRVSNSEKKRDIGDFVDVLLSLDGDEKLQEDDMIAVLWEMIFRGTDTTALLTEWTMAELVLNPNVQTKLRDEILTAVGDGADGDVADADLAKLPYLNAVVKETLRLHPPGPLLSWARLSTSDVQLSNGMVIPKGTTAMVNMWAITHDQTVWSDPLKFDPERFTGNADMDIRGGDLRLAPFGAGRRVCPGKNMGLATVTRWVAELVRRFEWGQDQTEPVDLGEVLKLSCEMEHPLRAVVTEIF.

Residues 36–56 (LFLAVVFLSIVTWALAGGGGV) form a helical membrane-spanning segment. Cys481 serves as a coordination point for heme.

Belongs to the cytochrome P450 family. The cofactor is heme.

The protein resides in the membrane. Its function is as follows. Functions probably in association with CYP78A5 in regulating relative growth of the shoot apical meristem and plant organs via a non-cell-autonomous signal. The protein is Cytochrome P450 78A7 (CYP78A7) of Arabidopsis thaliana (Mouse-ear cress).